An 85-amino-acid chain; its full sequence is Three-finger toxin MALT0044C (85 aa).

An N-terminal signal peptide occupies residues 1–21; sequence MKTLLLTLVVVTIVCLDLGNT. Cystine bridges form between C24/C45, C38/C63, C67/C78, and C79/C84.

It belongs to the three-finger toxin family. Short-chain subfamily. Expressed by the venom gland.

The protein localises to the secreted. The chain is Three-finger toxin MALT0044C from Micrurus altirostris (Uruguayan coral snake).